The primary structure comprises 64 residues: Large ribosomal subunit protein bL32 (64 aa).

Belongs to the bacterial ribosomal protein bL32 family.

This chain is Large ribosomal subunit protein bL32, found in Bifidobacterium longum (strain DJO10A).